A 215-amino-acid polypeptide reads, in one-letter code: Cytochrome b6 (215 aa).

The chain crosses the membrane as a helical span at residues Ile32–Phe52. Heme c is bound at residue Cys35. Heme b-binding residues include His86 and His100. The next 3 helical transmembrane spans lie at Ala90 to Phe110, Leu116 to Tyr136, and Leu186 to Ile206. Heme b contacts are provided by His187 and His202.

This sequence belongs to the cytochrome b family. PetB subfamily. As to quaternary structure, the 4 large subunits of the cytochrome b6-f complex are cytochrome b6, subunit IV (17 kDa polypeptide, PetD), cytochrome f and the Rieske protein, while the 4 small subunits are PetG, PetL, PetM and PetN. The complex functions as a dimer. Heme b is required as a cofactor. The cofactor is heme c.

It localises to the plastid. Its subcellular location is the chloroplast thylakoid membrane. Its function is as follows. Component of the cytochrome b6-f complex, which mediates electron transfer between photosystem II (PSII) and photosystem I (PSI), cyclic electron flow around PSI, and state transitions. This Phalaenopsis aphrodite subsp. formosana (Moth orchid) protein is Cytochrome b6.